Reading from the N-terminus, the 239-residue chain is Derlin-2 (239 aa).

Topologically, residues 1–56 (MAYQSLRLEYLQIPPVSRAYTTACVLTTAAVQLELITPFQLYFNPELIFKHFQIWR) are cytoplasmic. The chain crosses the membrane as a helical span at residues 57-77 (LITNFLFFGPVGFNFLFNMIF). Over 78 to 98 (LYRYCRMLEEGSFRGRTADFV) the chain is Lumenal. The chain crosses the membrane as a helical span at residues 99–119 (FMFLFGGFLMTLFGLFVSLVF). Residues 120–150 (LGQAFTIMLVYVWSRRNPYVRMNFFGLLNFQ) are Cytoplasmic-facing. A helical membrane pass occupies residues 151-171 (APFLPWVLMGFSLLLGNSIIV). Asp-172 is a topological domain (lumenal). Residues 173 to 193 (LLGIAVGHIYFFLEDVFPNQP) traverse the membrane as a helical segment. The Cytoplasmic portion of the chain corresponds to 194–239 (GGIRILKTPSILKAIFDTPDEDPNYNPLPEERPGGFAWGEGQRLGG). The segment at 215–239 (DPNYNPLPEERPGGFAWGEGQRLGG) is disordered. The span at 229-239 (FAWGEGQRLGG) shows a compositional bias: gly residues.

Belongs to the derlin family. As to quaternary structure, forms homo- and heterooligomers with DERL3 and, to a lesser extent, with DERL1. Interacts with the SEL1L/SYVN1 and VCP/SELENOS protein complexes. Mediates association between VCP and EDEM1, as well as that between VCP and the misfolded glycoproteins. Interacts with OS9. Interacts with SELENOK and SELENOS. Interacts with the signal recognition particle/SRP and the SRP receptor; in the process of endoplasmic reticulum stress-induced pre-emptive quality control. Interacts with CCDC47.

It localises to the endoplasmic reticulum membrane. Its function is as follows. Functional component of endoplasmic reticulum-associated degradation (ERAD) for misfolded lumenal glycoproteins, but not that of misfolded nonglycoproteins. May act by forming a channel that allows the retrotranslocation of misfolded glycoproteins into the cytosol where they are ubiquitinated and degraded by the proteasome. May mediate the interaction between VCP and misfolded glycoproteins. May also be involved in endoplasmic reticulum stress-induced pre-emptive quality control, a mechanism that selectively attenuates the translocation of newly synthesized proteins into the endoplasmic reticulum and reroutes them to the cytosol for proteasomal degradation. The polypeptide is Derlin-2 (Pongo abelii (Sumatran orangutan)).